A 179-amino-acid chain; its full sequence is ATP synthase subunit delta (179 aa).

This sequence belongs to the ATPase delta chain family. F-type ATPases have 2 components, F(1) - the catalytic core - and F(0) - the membrane proton channel. F(1) has five subunits: alpha(3), beta(3), gamma(1), delta(1), epsilon(1). F(0) has three main subunits: a(1), b(2) and c(10-14). The alpha and beta chains form an alternating ring which encloses part of the gamma chain. F(1) is attached to F(0) by a central stalk formed by the gamma and epsilon chains, while a peripheral stalk is formed by the delta and b chains.

Its subcellular location is the cell inner membrane. Its function is as follows. F(1)F(0) ATP synthase produces ATP from ADP in the presence of a proton or sodium gradient. F-type ATPases consist of two structural domains, F(1) containing the extramembraneous catalytic core and F(0) containing the membrane proton channel, linked together by a central stalk and a peripheral stalk. During catalysis, ATP synthesis in the catalytic domain of F(1) is coupled via a rotary mechanism of the central stalk subunits to proton translocation. This protein is part of the stalk that links CF(0) to CF(1). It either transmits conformational changes from CF(0) to CF(1) or is implicated in proton conduction. The protein is ATP synthase subunit delta of Burkholderia mallei (strain SAVP1).